A 1027-amino-acid polypeptide reads, in one-letter code: Cysteine-rich motor neuron 1 protein (1027 aa).

The signal sequence occupies residues Met-1–Ala-28. Positions Leu-29 to Glu-106 constitute an IGFBP N-terminal domain. The Extracellular segment spans residues Leu-29–His-931. Disulfide bonds link Cys-31-Cys-54, Cys-34-Cys-56, Cys-39-Cys-57, and Cys-45-Cys-60. Asn-65 carries an N-linked (GlcNAc...) asparagine glycan. 2 disulfide bridges follow: Cys-68–Cys-84 and Cys-78–Cys-103. Residues Arg-308–Asp-310 carry the Cell attachment site motif. N-linked (GlcNAc...) asparagine glycosylation occurs at Asn-324. VWFC domains are found at residues Pro-328–Glu-385 and Ala-395–Glu-451. Antistasin-like domains lie at Cys-463–Cys-492, Cys-499–Cys-526, Cys-533–Cys-558, and Cys-561–Cys-586. An N-linked (GlcNAc...) asparagine glycan is attached at Asn-468. VWFC domains lie at Gly-601–Pro-658 and Ser-672–Pro-730. Asn-741 is a glycosylation site (N-linked (GlcNAc...) asparagine). 2 consecutive VWFC domains span residues Ser-746–Leu-804 and Ala-810–Pro-867. The interval Ile-877–Ser-897 is disordered. Positions Glu-878–Arg-888 are enriched in basic and acidic residues. The short motif at Arg-883–Asp-885 is the Cell attachment site element. Residues Trp-932 to Val-952 traverse the membrane as a helical segment. Residues Asn-953 to Ala-1027 lie on the Cytoplasmic side of the membrane.

It localises to the membrane. Functionally, may play a role in CNS development by interacting with growth factors implicated in motor neuron differentiation and survival. The sequence is that of Cysteine-rich motor neuron 1 protein (crim1) from Danio rerio (Zebrafish).